We begin with the raw amino-acid sequence, 31 residues long: Cytochrome b6-f complex subunit 6 (31 aa).

A helical membrane pass occupies residues 4–24 (VVSYLGILAAFALVTIGIFLV).

The protein belongs to the PetL family. In terms of assembly, the 4 large subunits of the cytochrome b6-f complex are cytochrome b6, subunit IV (17 kDa polypeptide, PetD), cytochrome f and the Rieske protein, while the 4 small subunits are PetG, PetL, PetM and PetN. The complex functions as a dimer.

The protein resides in the plastid. Its subcellular location is the chloroplast thylakoid membrane. Its function is as follows. Component of the cytochrome b6-f complex, which mediates electron transfer between photosystem II (PSII) and photosystem I (PSI), cyclic electron flow around PSI, and state transitions. PetL is important for photoautotrophic growth as well as for electron transfer efficiency and stability of the cytochrome b6-f complex. This Mesostigma viride (Green alga) protein is Cytochrome b6-f complex subunit 6.